Here is a 123-residue protein sequence, read N- to C-terminus: Large ribosomal subunit protein bL19 (123 aa).

This sequence belongs to the bacterial ribosomal protein bL19 family.

Functionally, this protein is located at the 30S-50S ribosomal subunit interface and may play a role in the structure and function of the aminoacyl-tRNA binding site. The sequence is that of Large ribosomal subunit protein bL19 (rplS) from Treponema pallidum (strain Nichols).